We begin with the raw amino-acid sequence, 76 residues long: MDFKRVKDYLSWLYYQYQIISCCAVLEPWEQSMFNTIILTIFAMVVYTAYVFIPIHIRLAWEFFSKMCGYHSTISN.

At 1–11 (MDFKRVKDYLS) the chain is on the cytoplasmic side. Residues 12-29 (WLYYQYQIISCCAVLEPW) traverse the membrane as a helical segment. The Lumenal segment spans residues 30-36 (EQSMFNT). A helical membrane pass occupies residues 37–57 (IILTIFAMVVYTAYVFIPIHI). The Cytoplasmic segment spans residues 58–76 (RLAWEFFSKMCGYHSTISN).

Belongs to the SPTSS family. SPTSSB subfamily. Component of the serine palmitoyltransferase (SPT) complex, which is composed of SPTLC1, SPTLC2 or SPTLC3 and SPTSSA or SPTSSB. The heterodimer consisting of SPTLC1 and SPTLC2/SPTLC3 forms the catalytic core of the enzyme, while SPTSSA or SPTSSB subunits determine substrate specificity. SPT also interacts with ORMDL proteins, especially ORMDL3, which negatively regulate SPT activity in the presence of ceramides.

The protein localises to the endoplasmic reticulum membrane. It functions in the pathway lipid metabolism; sphingolipid metabolism. Its function is as follows. Component of the serine palmitoyltransferase multisubunit enzyme (SPT) that catalyzes the initial and rate-limiting step in sphingolipid biosynthesis by condensing L-serine and activated acyl-CoA (most commonly palmitoyl-CoA) to form long-chain bases. The SPT complex is composed of SPTLC1, SPTLC2 or SPTLC3 and SPTSSA or SPTSSB. Within this complex, the heterodimer consisting of SPTLC1 and SPTLC2/SPTLC3 forms the catalytic core. Within the SPT complex, SPTSSB stimulates the catalytic activity and plays a role in substrate specificity. SPT complexes with this subunit showing a preference for longer acyl-CoAs. The SPTLC1-SPTLC2-SPTSSB complex shows a strong preference for C18-CoA substrate, while the SPTLC1-SPTLC3-SPTSSB isozyme displays an ability to use a broader range of acyl-CoAs, without apparent preference. This Bos taurus (Bovine) protein is Serine palmitoyltransferase small subunit B (SPTSSB).